Reading from the N-terminus, the 655-residue chain is p-hydroxybenzoic acid efflux pump subunit AaeB (655 aa).

Helical transmembrane passes span 13–33, 38–58, 69–89, 93–113, 121–141, 152–172, 370–390, 407–427, 431–451, 459–479, and 482–502; these read FAVK…HFQL, WAVL…GGEP, LRII…ILMI, LLMV…SSLV, WGLA…EPLL, EIVI…PRSI, LFWL…IAVV, FLYG…VILP, QSML…GIEV, LGAL…TFHF, and FLDS…VILL.

It belongs to the aromatic acid exporter ArAE (TC 2.A.85) family.

It localises to the cell inner membrane. Its function is as follows. Forms an efflux pump with AaeA. Could function as a metabolic relief valve, allowing to eliminate certain compounds when they accumulate to high levels in the cell. The protein is p-hydroxybenzoic acid efflux pump subunit AaeB of Enterobacter cloacae subsp. cloacae (strain ATCC 13047 / DSM 30054 / NBRC 13535 / NCTC 10005 / WDCM 00083 / NCDC 279-56).